Reading from the N-terminus, the 298-residue chain is Protein REVEILLE 8 (298 aa).

Positions 1–44 (MSSSPSRNPTNAEAPPPPPTSTDAVAEGSSKKVRKPYTITKSRE) are disordered. In terms of domain architecture, HTH myb-type spans 38–92 (TITKSRESWTEEEHDKFLEALQLFDRDWKKIEDFVGSKTVIQIRSHAQKYFLKVQ). Positions 65–88 (WKKIEDFVGSKTVIQIRSHAQKYF) form a DNA-binding region, H-T-H motif. A disordered region spans residues 96–123 (TLAHVPPPRPKRKAAHPYPQKASKNAQM).

Its subcellular location is the nucleus. Functionally, transcriptional activator of evening element (EE)-containing clock-controlled genes. Forms a negative feedback loop with APRR5. Regulates the pattern of histone H3 acetylation of the TOC1 promoter. RVE4, RVE6 and RVE8 are components of the circadian system acting synergistically to regulate flowering time, redundantly to regulate leaf growth, and antagonistically to regulate hypocotyl elongation; their action seems independent of ZTL and HY5. This Arabidopsis thaliana (Mouse-ear cress) protein is Protein REVEILLE 8.